A 207-amino-acid chain; its full sequence is Large ribosomal subunit protein uL4 (207 aa).

The tract at residues arginine 43 to serine 80 is disordered. The segment covering glycine 69–valine 78 has biased composition (polar residues).

The protein belongs to the universal ribosomal protein uL4 family. In terms of assembly, part of the 50S ribosomal subunit.

One of the primary rRNA binding proteins, this protein initially binds near the 5'-end of the 23S rRNA. It is important during the early stages of 50S assembly. It makes multiple contacts with different domains of the 23S rRNA in the assembled 50S subunit and ribosome. Its function is as follows. Forms part of the polypeptide exit tunnel. The sequence is that of Large ribosomal subunit protein uL4 from Desulforapulum autotrophicum (strain ATCC 43914 / DSM 3382 / VKM B-1955 / HRM2) (Desulfobacterium autotrophicum).